A 512-amino-acid chain; its full sequence is ATP synthase subunit alpha (512 aa).

169–176 (GDRQTGKT) contacts ATP.

It belongs to the ATPase alpha/beta chains family. As to quaternary structure, F-type ATPases have 2 components, CF(1) - the catalytic core - and CF(0) - the membrane proton channel. CF(1) has five subunits: alpha(3), beta(3), gamma(1), delta(1), epsilon(1). CF(0) has three main subunits: a(1), b(2) and c(9-12). The alpha and beta chains form an alternating ring which encloses part of the gamma chain. CF(1) is attached to CF(0) by a central stalk formed by the gamma and epsilon chains, while a peripheral stalk is formed by the delta and b chains.

The protein localises to the cell inner membrane. The enzyme catalyses ATP + H2O + 4 H(+)(in) = ADP + phosphate + 5 H(+)(out). Its function is as follows. Produces ATP from ADP in the presence of a proton gradient across the membrane. The alpha chain is a regulatory subunit. In Leptothrix cholodnii (strain ATCC 51168 / LMG 8142 / SP-6) (Leptothrix discophora (strain SP-6)), this protein is ATP synthase subunit alpha.